Consider the following 255-residue polypeptide: Geranylgeranylglyceryl phosphate synthase (255 aa).

Mg(2+) contacts are provided by Asp31 and Ser60. Sn-glycerol 1-phosphate is bound by residues Tyr179–Gly185, Gly211–Gly212, and Gly233–Thr234.

This sequence belongs to the GGGP/HepGP synthase family. Group II subfamily. Mg(2+) is required as a cofactor.

Its subcellular location is the cytoplasm. It catalyses the reaction sn-glycerol 1-phosphate + (2E,6E,10E)-geranylgeranyl diphosphate = sn-3-O-(geranylgeranyl)glycerol 1-phosphate + diphosphate. The protein operates within membrane lipid metabolism; glycerophospholipid metabolism. Its function is as follows. Prenyltransferase that catalyzes the transfer of the geranylgeranyl moiety of geranylgeranyl diphosphate (GGPP) to the C3 hydroxyl of sn-glycerol-1-phosphate (G1P). This reaction is the first ether-bond-formation step in the biosynthesis of archaeal membrane lipids. The polypeptide is Geranylgeranylglyceryl phosphate synthase (Methanothrix thermoacetophila (strain DSM 6194 / JCM 14653 / NBRC 101360 / PT) (Methanosaeta thermophila)).